A 247-amino-acid polypeptide reads, in one-letter code: Ubiquinone biosynthesis O-methyltransferase (247 aa).

Residues R39, G70, D91, and M134 each contribute to the S-adenosyl-L-methionine site.

Belongs to the methyltransferase superfamily. UbiG/COQ3 family.

It carries out the reaction a 3-demethylubiquinol + S-adenosyl-L-methionine = a ubiquinol + S-adenosyl-L-homocysteine + H(+). The enzyme catalyses a 3-(all-trans-polyprenyl)benzene-1,2-diol + S-adenosyl-L-methionine = a 2-methoxy-6-(all-trans-polyprenyl)phenol + S-adenosyl-L-homocysteine + H(+). Its pathway is cofactor biosynthesis; ubiquinone biosynthesis. O-methyltransferase that catalyzes the 2 O-methylation steps in the ubiquinone biosynthetic pathway. The polypeptide is Ubiquinone biosynthesis O-methyltransferase (Cereibacter sphaeroides (strain ATCC 17023 / DSM 158 / JCM 6121 / CCUG 31486 / LMG 2827 / NBRC 12203 / NCIMB 8253 / ATH 2.4.1.) (Rhodobacter sphaeroides)).